Here is a 275-residue protein sequence, read N- to C-terminus: COP9 signalosome complex subunit 7a (275 aa).

An N-acetylserine modification is found at serine 2. The PCI domain maps to 2 to 159 (SAEVKVTGQN…QRLEVDYSIG (158 aa)). The stretch at 185-233 (LSGIEEQVSRANQHKEQQLGLKQQIESEVANLKKTIKVTTAAAAAATSQ) forms a coiled coil. Residues 228–275 (AAATSQDPEQHLTELREPASGTNQRQPSKKASKGKGLRGSAKIWSKSN) are disordered. Over residues 235 to 244 (PEQHLTELRE) the composition is skewed to basic and acidic residues. Residues 254 to 263 (PSKKASKGKG) show a composition bias toward basic residues.

This sequence belongs to the CSN7/EIF3M family. CSN7 subfamily. In terms of assembly, component of the CSN complex, composed of COPS1/GPS1, COPS2, COPS3, COPS4, COPS5, COPS6, COPS7 (COPS7A or COPS7B), COPS8 and COPS9. In the complex, it probably interacts directly with COPS1, COPS2, COPS4, COPS5, COPS6 and COPS8. Interacts with PMF1. Interacts with the translation initiation factor EIF3S6. Interacts with CK2 and PKD. Interacts directly with ID3. Phosphorylated by CK2 and PKD kinases.

The protein resides in the cytoplasm. It localises to the nucleus. Its function is as follows. Component of the COP9 signalosome complex (CSN), a complex involved in various cellular and developmental processes. The CSN complex is an essential regulator of the ubiquitin (Ubl) conjugation pathway by mediating the deneddylation of the cullin subunits of SCF-type E3 ligase complexes, leading to decrease the Ubl ligase activity of SCF-type complexes such as SCF, CSA or DDB2. The complex is also involved in phosphorylation of p53/TP53, JUN, I-kappa-B-alpha/NFKBIA, ITPK1 and IRF8/ICSBP, possibly via its association with CK2 and PKD kinases. CSN-dependent phosphorylation of TP53 and JUN promotes and protects degradation by the Ubl system, respectively. This Mus musculus (Mouse) protein is COP9 signalosome complex subunit 7a (Cops7a).